A 574-amino-acid chain; its full sequence is Aspartate--tRNA ligase (574 aa).

Glu172 lines the L-aspartate pocket. An aspartate region spans residues 196-199 (QIFK). Arg218 contacts L-aspartate. ATP-binding positions include 218 to 220 (RDE) and Gln227. His453 is a binding site for L-aspartate. Glu487 contacts ATP. Arg494 serves as a coordination point for L-aspartate. 539–542 (GLDR) lines the ATP pocket.

This sequence belongs to the class-II aminoacyl-tRNA synthetase family. Type 1 subfamily. Homodimer.

It localises to the cytoplasm. It catalyses the reaction tRNA(Asp) + L-aspartate + ATP = L-aspartyl-tRNA(Asp) + AMP + diphosphate. Its function is as follows. Catalyzes the attachment of L-aspartate to tRNA(Asp) in a two-step reaction: L-aspartate is first activated by ATP to form Asp-AMP and then transferred to the acceptor end of tRNA(Asp). The chain is Aspartate--tRNA ligase from Blochmanniella pennsylvanica (strain BPEN).